Reading from the N-terminus, the 510-residue chain is MIWHVQNENFILDSTRIFMKAFHLLLFNGSFIFPECILIFGLILLLMIDLTSDQKDRPWFYFISSTSLVISITALLFRWREEPIISFSGNFQTNNFNEIFQFLILLCSTLCIPLSVEYIECTEMAITEFLLFVLTATLGGMFLCGANDLITIFVALECFSLCSYLLSGYTKRDLRSNEATMKYLLMGGASSSILVLGFSWLYGLSGGEIELQEIVNGLINTQMYNSPGISIALIFITVGLGFKLSLAPFHQWTPDVYEGSPTPVVAFLSVTSKVAALALATRILDIPFYFSSNEWHLLLEILAILSMILGNLLAITQTSMKRMLAYSSIGQIGYVIIGIIVGDSNDGYASMITYMLFYISMNLGTFACIVLFGLRTGTDNIRDYAGLYTKDPFLALSLALCLLSLGGLPPLAGFFGKLYLFWCGWQAGLYFLVSIGLLTSVLSIYYYLKIIKLLMTGRNQEITPYVRNYRRSPLRSNNSIELSMTVCVIASTILGISMNPILAIAQDTLF.

Helical transmembrane passes span 31 to 51, 59 to 79, 99 to 119, 124 to 144, 149 to 169, 184 to 204, 229 to 249, 261 to 281, 295 to 315, 323 to 343, 354 to 374, 395 to 415, 418 to 438, and 484 to 504; these read FIFP…IDLT, WFYF…LFRW, IFQF…VEYI, MAIT…MFLC, LITI…LSGY, LLMG…LYGL, ISIA…LAPF, PTPV…ALAT, WHLL…LLAI, MLAY…IVGD, YMLF…LFGL, ALSL…AGFF, LYLF…IGLL, and MTVC…ILAI.

It belongs to the complex I subunit 2 family. NDH is composed of at least 16 different subunits, 5 of which are encoded in the nucleus.

The protein resides in the plastid. Its subcellular location is the chloroplast thylakoid membrane. The enzyme catalyses a plastoquinone + NADH + (n+1) H(+)(in) = a plastoquinol + NAD(+) + n H(+)(out). It carries out the reaction a plastoquinone + NADPH + (n+1) H(+)(in) = a plastoquinol + NADP(+) + n H(+)(out). In terms of biological role, NDH shuttles electrons from NAD(P)H:plastoquinone, via FMN and iron-sulfur (Fe-S) centers, to quinones in the photosynthetic chain and possibly in a chloroplast respiratory chain. The immediate electron acceptor for the enzyme in this species is believed to be plastoquinone. Couples the redox reaction to proton translocation, and thus conserves the redox energy in a proton gradient. This chain is NAD(P)H-quinone oxidoreductase subunit 2 A, chloroplastic, found in Saccharum hybrid (Sugarcane).